A 161-amino-acid chain; its full sequence is Protein translocase subunit SecE (161 aa).

Over residues 1–12 (MSDEGDVADEAV) the composition is skewed to acidic residues. A disordered region spans residues 1-80 (MSDEGDVADE…GVAKDDSTTK (80 aa)). The chain crosses the membrane as a helical span at residues 133–153 (VVLAFLAFMVALVAGADLGLT).

Belongs to the SecE/SEC61-gamma family. In terms of assembly, component of the Sec protein translocase complex. Heterotrimer consisting of SecY, SecE and SecG subunits. The heterotrimers can form oligomers, although 1 heterotrimer is thought to be able to translocate proteins. Interacts with the ribosome. Interacts with SecDF, and other proteins may be involved. Interacts with SecA.

The protein localises to the cell membrane. Essential subunit of the Sec protein translocation channel SecYEG. Clamps together the 2 halves of SecY. May contact the channel plug during translocation. The protein is Protein translocase subunit SecE of Mycobacterium bovis (strain ATCC BAA-935 / AF2122/97).